The chain runs to 396 residues: MSLYGMMRTGVSGMNAQANRLSTVADNIANASTVGYKRAETQFSSLVLPSTAGQYNSGSVLTDVRYGISDQGGIRSTSSTTDLAIDGNGYFVVQGPGGSTYLTRAGSFVPDKNGDLVNSAGYYLLGAGADEAAGGLTVAGLNVVNVNAAALPAEGSTAGDFTVNLPSTDQAPAAGGYNHKTSLISYNDKGEKITLDVYFTKTGADEWNVSVKNAADGVEIGTTVLNFDPTTGDLVSGGNVAVNLGAYGGQTLNLNLGGSTQRAGDYTISQAVINGQAPSSIKGVDVGNDGAVVAVYENGTQKVLYRIPLANVASPDRMTVVSGNIFLPSAESGDVRLGFPQGDGMGKIMSGTLEESNADIAQELTDMIEAQRSYTANSKVFQTGFELMDVLVNLKR.

The protein belongs to the flagella basal body rod proteins family.

The protein localises to the bacterial flagellum basal body. This Brucella abortus biovar 1 (strain 9-941) protein is Flagellar hook protein FlgE (flgE).